Reading from the N-terminus, the 225-residue chain is MDDITPDLLLRAYASGIFPMAPDAGSMELSWYLPEERGIMPLTGMHVPKKLMRLVMSGRMTVTADRAFDEVMRACAEPAPGRETTWISGRIRVLYGALHRQGNAHSIEVREGEKLVGGLYGVSLRGAFFGESMFSRERDASKVALVHLVAGLRKGRFTLLDTQYTTPHLTGLGGIGIPAADYQSLLHQALTVRAVWPDDFSLQALRESIASLRVPAGRTPAGDPP.

It belongs to the L/F-transferase family.

Its subcellular location is the cytoplasm. It carries out the reaction N-terminal L-lysyl-[protein] + L-leucyl-tRNA(Leu) = N-terminal L-leucyl-L-lysyl-[protein] + tRNA(Leu) + H(+). The enzyme catalyses N-terminal L-arginyl-[protein] + L-leucyl-tRNA(Leu) = N-terminal L-leucyl-L-arginyl-[protein] + tRNA(Leu) + H(+). It catalyses the reaction L-phenylalanyl-tRNA(Phe) + an N-terminal L-alpha-aminoacyl-[protein] = an N-terminal L-phenylalanyl-L-alpha-aminoacyl-[protein] + tRNA(Phe). Functions in the N-end rule pathway of protein degradation where it conjugates Leu, Phe and, less efficiently, Met from aminoacyl-tRNAs to the N-termini of proteins containing an N-terminal arginine or lysine. This Gluconobacter oxydans (strain 621H) (Gluconobacter suboxydans) protein is Leucyl/phenylalanyl-tRNA--protein transferase.